Reading from the N-terminus, the 474-residue chain is B-cell CLL/lymphoma 6 member B protein (474 aa).

The 68-residue stretch at 38–105 folds into the BTB domain; the sequence is TDVTLLVGGQ…MYTSRLRLSP (68 aa). 2 disordered regions span residues 144–190 and 210–249; these read PVEV…PDPK and GSLV…GLQS. Residues 150 to 160 show a composition bias toward pro residues; that stretch reads PRPPTVAPPGS. Basic and acidic residues predominate over residues 162–172; it reads RRSEGHPDPPT. 3 stretches are compositionally biased toward polar residues: residues 173–183, 210–220, and 240–249; these read ESRSCSQGSPS, GSLVGESSGQP, and EEGTTPGLQS. C2H2-type zinc fingers lie at residues 323–345, 351–373, 379–401, 407–429, and 435–458; these read YKCQ…RTVH, YRCS…SRIH, YKCE…VLIH, YPCP…VRIH, and YHCD…RQKH.

Associates with BCL6 through the BTB domain. As to expression, ubiquitously expressed with higher expression found in heart and lung.

Its subcellular location is the nucleus. In terms of biological role, acts as a sequence-specific transcriptional repressor in association with BCL6. Necessary for activation of naive T-cells to antigenic stimulation. May attenuate the regulatory effect of BCL6 on antigenic activation of naive CD4 T-cells by forming a heterodimer with BCL6. This chain is B-cell CLL/lymphoma 6 member B protein (Bcl6b), found in Mus musculus (Mouse).